We begin with the raw amino-acid sequence, 307 residues long: Ribosomal protein L11 methyltransferase (307 aa).

S-adenosyl-L-methionine-binding residues include T144, G165, D187, and N235.

The protein belongs to the methyltransferase superfamily. PrmA family.

The protein localises to the cytoplasm. It carries out the reaction L-lysyl-[protein] + 3 S-adenosyl-L-methionine = N(6),N(6),N(6)-trimethyl-L-lysyl-[protein] + 3 S-adenosyl-L-homocysteine + 3 H(+). Its function is as follows. Methylates ribosomal protein L11. The protein is Ribosomal protein L11 methyltransferase of Psychrobacter sp. (strain PRwf-1).